A 958-amino-acid polypeptide reads, in one-letter code: Transportin MOS14 (958 aa).

An Importin N-terminal domain is found at 26-93 (ADRWLQNFQG…RQSLTTLLKK (68 aa)).

The protein belongs to the importin beta family. As to quaternary structure, interacts with RS2Z33, RSZ21, RS31A, SR34 and RAN1.

Its subcellular location is the nucleus. Functions as a nuclear import receptor for serine-arginine rich (SR) proteins. Regulates nuclear import of SR proteins that are required for proper splicing of the two resistance (R) genes SNC1 and RPS4, a crucial step for their functions in plant immunity. The protein is Transportin MOS14 of Arabidopsis thaliana (Mouse-ear cress).